A 291-amino-acid polypeptide reads, in one-letter code: Nucleotide-binding protein lhv_0732 (291 aa).

13–20 (GMSGAGKT) is a binding site for ATP. 61–64 (DLRV) is a GTP binding site.

It belongs to the RapZ-like family.

Functionally, displays ATPase and GTPase activities. This chain is Nucleotide-binding protein lhv_0732, found in Lactobacillus helveticus (strain DPC 4571).